A 409-amino-acid chain; its full sequence is ATPase ASNA1 homolog (409 aa).

Residue 21-28 (KGGVGKTT) participates in ATP binding. The active site involves aspartate 62. ATP is bound by residues glutamate 303 and asparagine 330. Zn(2+)-binding residues include cysteine 342 and cysteine 345.

The protein belongs to the arsA ATPase family. Homodimer.

It localises to the cytoplasm. It is found in the endoplasmic reticulum. Its function is as follows. ATPase required for the post-translational delivery of tail-anchored (TA) proteins to the endoplasmic reticulum. Recognizes and selectively binds the transmembrane domain of TA proteins in the cytosol. This complex then targets to the endoplasmic reticulum by membrane-bound receptors, where the tail-anchored protein is released for insertion. This process is regulated by ATP binding and hydrolysis. ATP binding drives the homodimer towards the closed dimer state, facilitating recognition of newly synthesized TA membrane proteins. ATP hydrolysis is required for insertion. Subsequently, the homodimer reverts towards the open dimer state, lowering its affinity for the membrane-bound receptor, and returning it to the cytosol to initiate a new round of targeting. This chain is ATPase ASNA1 homolog, found in Leishmania major.